A 332-amino-acid chain; its full sequence is Oligopeptide transport ATP-binding protein OppF (332 aa).

One can recognise an ABC transporter domain in the interval Lys23–Met264. Residue Gly56–Ser63 coordinates ATP.

This sequence belongs to the ABC transporter superfamily. The complex is composed of two ATP-binding proteins (OppD and OppF), two transmembrane proteins (OppB and OppC) and a solute-binding protein (OppA).

The protein resides in the cell inner membrane. The enzyme catalyses a [peptide](out) + ATP + H2O = a [peptide](in) + ADP + phosphate + H(+). In terms of biological role, part of the ABC transporter complex OppABCDF involved in the uptake of oligopeptides. Probably responsible for energy coupling to the transport system. In Haemophilus influenzae (strain ATCC 51907 / DSM 11121 / KW20 / Rd), this protein is Oligopeptide transport ATP-binding protein OppF (oppF).